The sequence spans 358 residues: DNA replication and repair protein RecF (358 aa).

30-37 (GNNGSGKT) is an ATP binding site.

The protein belongs to the RecF family.

It is found in the cytoplasm. The RecF protein is involved in DNA metabolism; it is required for DNA replication and normal SOS inducibility. RecF binds preferentially to single-stranded, linear DNA. It also seems to bind ATP. This chain is DNA replication and repair protein RecF, found in Histophilus somni (strain 129Pt) (Haemophilus somnus).